Consider the following 306-residue polypeptide: Acetyl-coenzyme A carboxylase carboxyl transferase subunit beta (306 aa).

The CoA carboxyltransferase N-terminal domain occupies 25 to 294 (LWIKDPTSGE…VVTPSPPSPT (270 aa)). Residues 284–306 (AVVTPSPPSPTDSQTSLSKTKAA) form a disordered region.

Belongs to the AccD/PCCB family. Acetyl-CoA carboxylase is a heterohexamer composed of biotin carboxyl carrier protein (AccB), biotin carboxylase (AccC) and two subunits each of ACCase subunit alpha (AccA) and ACCase subunit beta (AccD).

It localises to the cytoplasm. The enzyme catalyses N(6)-carboxybiotinyl-L-lysyl-[protein] + acetyl-CoA = N(6)-biotinyl-L-lysyl-[protein] + malonyl-CoA. The protein operates within lipid metabolism; malonyl-CoA biosynthesis; malonyl-CoA from acetyl-CoA: step 1/1. Functionally, component of the acetyl coenzyme A carboxylase (ACC) complex. Biotin carboxylase (BC) catalyzes the carboxylation of biotin on its carrier protein (BCCP) and then the CO(2) group is transferred by the transcarboxylase to acetyl-CoA to form malonyl-CoA. This is Acetyl-coenzyme A carboxylase carboxyl transferase subunit beta from Bartonella tribocorum (strain CIP 105476 / IBS 506).